A 500-amino-acid chain; its full sequence is Glutathione gamma-glutamylcysteinyltransferase 1 (500 aa).

The Peptidase C83 domain maps to 1–221 (MEVASLYRRV…GFMLVSRRSS (221 aa)). Catalysis depends on residues Cys56, His162, and Asp180.

The protein belongs to the phytochelatin synthase family. Expressed in roots and shoots.

It carries out the reaction [Glu(-Cys)](n)-Gly + glutathione + H(+) = [Glu(-Cys)](n+1)-Gly + glycine. Its activity is regulated as follows. Requires cadmium for activity. Functionally, involved in the synthesis of phytochelatins (PC) and homophytochelatins (hPC), the heavy-metal-binding peptides of plants. This Triticum aestivum (Wheat) protein is Glutathione gamma-glutamylcysteinyltransferase 1 (PCS1).